The chain runs to 132 residues: Small ribosomal subunit protein uS8 (132 aa).

The protein belongs to the universal ribosomal protein uS8 family. Part of the 30S ribosomal subunit. Contacts proteins S5 and S12.

Its function is as follows. One of the primary rRNA binding proteins, it binds directly to 16S rRNA central domain where it helps coordinate assembly of the platform of the 30S subunit. The chain is Small ribosomal subunit protein uS8 from Geotalea daltonii (strain DSM 22248 / JCM 15807 / FRC-32) (Geobacter daltonii).